Reading from the N-terminus, the 305-residue chain is DNA-directed RNA polymerase 35 kDa subunit (305 aa).

The protein belongs to the poxviridae DNA-directed RNA polymerase 35 kDa subunit family. In terms of assembly, the DNA-dependent RNA polymerase used for intermediate and late genes expression consists of eight subunits 147 kDa, 133 kDa, 35 kDa, 30 kDa, 22 kDa, 19 kDa, 18 kDa and 7 kDa totalling more than 500 kDa in mass. The same holoenzyme, with the addition of the transcription-specificity factor RAP94, is used for early gene expression.

The protein resides in the virion. It catalyses the reaction RNA(n) + a ribonucleoside 5'-triphosphate = RNA(n+1) + diphosphate. Functionally, part of the DNA-dependent RNA polymerase which catalyzes the transcription of viral DNA into RNA using the four ribonucleoside triphosphates as substrates. Responsible for the transcription of early, intermediate and late genes. DNA-dependent RNA polymerase associates with the early transcription factor (ETF), itself composed of D6 and A7, thereby allowing the early genes transcription. Late transcription, and probably also intermediate transcription, require newly synthesized RNA polymerase. The sequence is that of DNA-directed RNA polymerase 35 kDa subunit (RPO35) from Homo sapiens (Human).